The chain runs to 226 residues: LIM domain-containing protein PLIM2a (226 aa).

LIM zinc-binding domains follow at residues 8–68 (DKCK…LFKE) and 104–164 (DKCA…LFLE). A disordered region spans residues 173 to 226 (QAAANHRRSASSGGASPPSDDHKPDDTASIPEAKEDDAAPEAAGEEEPEPVVES). A compositionally biased stretch (basic and acidic residues) spans 191-209 (SDDHKPDDTASIPEAKEDD). Residues 210 to 226 (AAPEAAGEEEPEPVVES) show a composition bias toward acidic residues.

In terms of assembly, interacts with F-actin. As to expression, predominantly expressed in flowers, in the tapetum and in pollen grains. Detected in leaves and stems.

It localises to the cytoplasm. Its subcellular location is the cytoskeleton. Functionally, binds to actin filaments and promotes cross-linking into thick bundles. Has an actin-stabilizing activity. The actin regulatory activities are inhibited by pH &gt; 6.8 but are [Ca(2+)] independent. The polypeptide is LIM domain-containing protein PLIM2a (Arabidopsis thaliana (Mouse-ear cress)).